The primary structure comprises 165 residues: Aspartate carbamoyltransferase regulatory chain (165 aa).

Zn(2+) is bound by residues Cys-121, Cys-126, Cys-149, and Cys-152.

The protein belongs to the PyrI family. Contains catalytic and regulatory chains. Zn(2+) is required as a cofactor.

Its function is as follows. Involved in allosteric regulation of aspartate carbamoyltransferase. The sequence is that of Aspartate carbamoyltransferase regulatory chain from Methanoregula boonei (strain DSM 21154 / JCM 14090 / 6A8).